A 20-amino-acid chain; its full sequence is Cytochrome P450 2A7 (20 aa).

It belongs to the cytochrome P450 family. Heme is required as a cofactor.

It localises to the endoplasmic reticulum membrane. It is found in the microsome membrane. It carries out the reaction an organic molecule + reduced [NADPH--hemoprotein reductase] + O2 = an alcohol + oxidized [NADPH--hemoprotein reductase] + H2O + H(+). Functionally, exhibits a high coumarin 7-hydroxylase activity. The polypeptide is Cytochrome P450 2A7 (CYP2A7) (Papio sp. (Baboon)).